Reading from the N-terminus, the 494-residue chain is V-type proton ATPase subunit B (494 aa).

This sequence belongs to the ATPase alpha/beta chains family. In terms of assembly, V-ATPase is a heteromultimeric enzyme composed of a peripheral catalytic V1 complex (main components: subunits A, B, C, D, E, and F) attached to an integral membrane V0 proton pore complex (main component: the proteolipid protein).

Its function is as follows. Non-catalytic subunit of the peripheral V1 complex of vacuolar ATPase. V-ATPase is responsible for acidifying a variety of intracellular compartments in eukaryotic cells. The sequence is that of V-type proton ATPase subunit B (VAPB) from Plasmodium falciparum.